Reading from the N-terminus, the 478-residue chain is Glycogen synthase (478 aa).

K15 is an ADP-alpha-D-glucose binding site.

Belongs to the glycosyltransferase 1 family. Bacterial/plant glycogen synthase subfamily.

It catalyses the reaction [(1-&gt;4)-alpha-D-glucosyl](n) + ADP-alpha-D-glucose = [(1-&gt;4)-alpha-D-glucosyl](n+1) + ADP + H(+). Its pathway is glycan biosynthesis; glycogen biosynthesis. Functionally, synthesizes alpha-1,4-glucan chains using ADP-glucose. In Caldicellulosiruptor bescii (strain ATCC BAA-1888 / DSM 6725 / KCTC 15123 / Z-1320) (Anaerocellum thermophilum), this protein is Glycogen synthase.